The sequence spans 159 residues: Serine-protein kinase RsbW (159 aa).

Belongs to the anti-sigma-factor family.

It carries out the reaction L-seryl-[protein] + ATP = O-phospho-L-seryl-[protein] + ADP + H(+). The catalysed reaction is L-threonyl-[protein] + ATP = O-phospho-L-threonyl-[protein] + ADP + H(+). In terms of biological role, negative regulator of sigma-B activity. Phosphorylates and inactivates its specific antagonist protein, RsbV. Upon phosphorylation of RsbV, RsbW is released and binds to sigma-B, thereby blocking its ability to form an RNA polymerase holoenzyme (E-sigma-B). This chain is Serine-protein kinase RsbW, found in Staphylococcus aureus (strain MSSA476).